Reading from the N-terminus, the 187-residue chain is Protein TIFY 11b (187 aa).

One can recognise a Tify domain in the interval 68-103 (ATAPAAPLTIFYGGRMVVFEDFPADKAAEVMRMASS). Positions 121–145 (PIMRKASLQRFFAKRKDRLAATTPY) match the Jas motif. Residues 123 to 130 (MRKASLQR) carry the Nuclear localization signal motif. Residues 139–168 (LAATTPYARPSPAETKASEPEEKKTPTSWL) are disordered. Positions 154–163 (KASEPEEKKT) are enriched in basic and acidic residues.

Belongs to the TIFY/JAZ family. Interacts with COI1B in a coronatine-dependent manner. Coronatine is an analog of jasmonoyl isoleucine (JA-Ile). Ubiquitinated. Targeted for degradation by the SCF(COI1) E3 ubiquitin ligase-proteasome pathway during jasmonate signaling.

It localises to the nucleus. In terms of biological role, repressor of jasmonate responses. In Oryza sativa subsp. japonica (Rice), this protein is Protein TIFY 11b.